A 104-amino-acid chain; its full sequence is Protein U9 (104 aa).

A helical membrane pass occupies residues 37 to 54 (GVQGLNADCSYVKSQCIK).

The protein localises to the host membrane. The polypeptide is Protein U9 (U9) (Human herpesvirus 6B (HHV-6 variant B)).